The sequence spans 502 residues: Mannitol 2-dehydrogenase (502 aa).

NAD(+) is bound at residue 35 to 46; the sequence is IVHVGVGGFHRA.

The protein belongs to the mannitol dehydrogenase family. Monomer.

The enzyme catalyses D-mannitol + NAD(+) = D-fructose + NADH + H(+). Functionally, catalyzes the NAD(H)-dependent interconversion of D-fructose and D-mannitol in the mannitol metabolic pathway. The chain is Mannitol 2-dehydrogenase from Pyricularia oryzae (strain 70-15 / ATCC MYA-4617 / FGSC 8958) (Rice blast fungus).